A 356-amino-acid chain; its full sequence is Alternative oxidase, mitochondrial (356 aa).

A helical transmembrane segment spans residues 152–172 (VIRFIFLETVAGVPGMVGGML). E159, E198, and H201 together coordinate Fe cation. The chain crosses the membrane as a helical span at residues 217–237 (LMVLGAQGVFFNGFFISYLIS). Residues E249, E304, and H307 each contribute to the Fe cation site. A disordered region spans residues 330–356 (YDNPEAPHPTKSAEIVKPTGWERDEVI).

It belongs to the alternative oxidase family. It depends on Fe cation as a cofactor.

Its subcellular location is the mitochondrion inner membrane. Functionally, catalyzes cyanide-resistant oxygen consumption. May increase respiration when the cytochrome respiratory pathway is restricted, or in response to low temperatures. In Ajellomyces capsulatus (Darling's disease fungus), this protein is Alternative oxidase, mitochondrial (AOX1).